A 120-amino-acid chain; its full sequence is ATP-dependent Clp protease adapter protein ClpS (120 aa).

The tract at residues 1 to 20 (MATKSPVNPKVPLVQEPDRD) is disordered.

Belongs to the ClpS family. Binds to the N-terminal domain of the chaperone ClpA.

Its function is as follows. Involved in the modulation of the specificity of the ClpAP-mediated ATP-dependent protein degradation. The protein is ATP-dependent Clp protease adapter protein ClpS of Albidiferax ferrireducens (strain ATCC BAA-621 / DSM 15236 / T118) (Rhodoferax ferrireducens).